The sequence spans 62 residues: UPF0434 protein SPO3421 (62 aa).

It belongs to the UPF0434 family.

In Ruegeria pomeroyi (strain ATCC 700808 / DSM 15171 / DSS-3) (Silicibacter pomeroyi), this protein is UPF0434 protein SPO3421.